The following is a 120-amino-acid chain: Large ribosomal subunit protein eL8 (120 aa).

The protein belongs to the eukaryotic ribosomal protein eL8 family. In terms of assembly, part of the 50S ribosomal subunit. Probably part of the RNase P complex.

The protein localises to the cytoplasm. Its function is as follows. Multifunctional RNA-binding protein that recognizes the K-turn motif in ribosomal RNA, the RNA component of RNase P, box H/ACA, box C/D and box C'/D' sRNAs. In Halobacterium salinarum (strain ATCC 29341 / DSM 671 / R1), this protein is Large ribosomal subunit protein eL8.